Reading from the N-terminus, the 143-residue chain is Insertion element IS2 uncharacterized 16.4 kDa protein (143 aa).

This chain is Insertion element IS2 uncharacterized 16.4 kDa protein, found in Escherichia coli.